Here is a 215-residue protein sequence, read N- to C-terminus: Adenylate kinase (215 aa).

Residue 10–15 (GAGKGT) coordinates ATP. The segment at 30 to 59 (STGDILRANVREGTELGLAAKAYMDKGELV) is NMP. AMP contacts are provided by residues Thr-31, Arg-36, 57–59 (ELV), 85–88 (GYPR), and Gln-92. Residues 126–162 (GRLMCKCGASYHTIANPPKKDNICDICGGEVYQRDDD) form an LID region. Residue Arg-127 participates in ATP binding. Positions 130 and 132 each coordinate Zn(2+). Position 135-136 (135-136 (SY)) interacts with ATP. Zn(2+) contacts are provided by Cys-149 and Cys-152. Arg-159 and Arg-170 together coordinate AMP. Lys-198 is an ATP binding site.

It belongs to the adenylate kinase family. As to quaternary structure, monomer.

It is found in the cytoplasm. It catalyses the reaction AMP + ATP = 2 ADP. Its pathway is purine metabolism; AMP biosynthesis via salvage pathway; AMP from ADP: step 1/1. Functionally, catalyzes the reversible transfer of the terminal phosphate group between ATP and AMP. Plays an important role in cellular energy homeostasis and in adenine nucleotide metabolism. The protein is Adenylate kinase of Methanosarcina mazei (strain ATCC BAA-159 / DSM 3647 / Goe1 / Go1 / JCM 11833 / OCM 88) (Methanosarcina frisia).